The chain runs to 862 residues: Valine--tRNA ligase (862 aa).

A 'HIGH' region motif is present at residues P43–H53. The tract at residues E459–A494 is disordered. The 'KMSKS' region signature appears at K574–S578. K577 contacts ATP.

Belongs to the class-I aminoacyl-tRNA synthetase family. ValS type 2 subfamily. Monomer.

It localises to the cytoplasm. The catalysed reaction is tRNA(Val) + L-valine + ATP = L-valyl-tRNA(Val) + AMP + diphosphate. Its function is as follows. Catalyzes the attachment of valine to tRNA(Val). As ValRS can inadvertently accommodate and process structurally similar amino acids such as threonine, to avoid such errors, it has a 'posttransfer' editing activity that hydrolyzes mischarged Thr-tRNA(Val) in a tRNA-dependent manner. The polypeptide is Valine--tRNA ligase (Salinispora arenicola (strain CNS-205)).